The primary structure comprises 126 residues: Probable V-type proton ATPase subunit G (126 aa).

The segment at 23–45 is disordered; sequence NEARKRKLQRTKQAKQEAQAEVE. The span at 26-35 shows a compositional bias: basic residues; it reads RKRKLQRTKQ.

The protein belongs to the V-ATPase G subunit family. In terms of assembly, V-ATPase is a heteromultimeric enzyme made up of two complexes: the ATP-hydrolytic V1 complex and the proton translocation V0 complex. The V1 complex consists of three catalytic AB heterodimers that form a heterohexamer, three peripheral stalks each consisting of EG heterodimers, one central rotor including subunits D and F, and the regulatory subunits C and H. The proton translocation complex V0 consists of the proton transport subunit a, a ring of proteolipid subunits c9c'', rotary subunit d, subunits e and f, and the accessory subunits vah-19/Ac45 and vah-20/PRR.

Subunit of the V1 complex of vacuolar(H+)-ATPase (V-ATPase), a multisubunit enzyme composed of a peripheral complex (V1) that hydrolyzes ATP and a membrane integral complex (V0) that translocates protons. V-ATPase is responsible for acidifying and maintaining the pH of intracellular compartments and in some cell types, is targeted to the plasma membrane, where it is responsible for acidifying the extracellular environment. In neurons, required for necrotic cell death by promoting intracellular acidification. This Caenorhabditis briggsae protein is Probable V-type proton ATPase subunit G.